Here is a 227-residue protein sequence, read N- to C-terminus: Orotate phosphoribosyltransferase (227 aa).

Lysine 26 contacts 5-phospho-alpha-D-ribose 1-diphosphate. 34–35 (FF) lines the orotate pocket. Residues 72-73 (YK), arginine 98, lysine 99, lysine 102, histidine 104, and 123-131 (DDVVSAGLS) each bind 5-phospho-alpha-D-ribose 1-diphosphate. The orotate site is built by serine 127 and arginine 155.

This sequence belongs to the purine/pyrimidine phosphoribosyltransferase family. PyrE subfamily. Homodimer. The cofactor is Mg(2+).

The catalysed reaction is orotidine 5'-phosphate + diphosphate = orotate + 5-phospho-alpha-D-ribose 1-diphosphate. Its pathway is pyrimidine metabolism; UMP biosynthesis via de novo pathway; UMP from orotate: step 1/2. Catalyzes the transfer of a ribosyl phosphate group from 5-phosphoribose 1-diphosphate to orotate, leading to the formation of orotidine monophosphate (OMP). This is Orotate phosphoribosyltransferase from Nitrosomonas europaea (strain ATCC 19718 / CIP 103999 / KCTC 2705 / NBRC 14298).